Here is a 156-residue protein sequence, read N- to C-terminus: MKLHILAVGHKMPDWIATGFDEYAKRMPPELRIELREIKPEQRSSGRPAESVMAAERIRIEAALPKNARIVALDERGKDWTTMQLAGALPSWQQDGRDVAFLIGGADGLDPDLKARADMLLRVSSLTLPHAMVRVLLAEQLYRAWTITQNHPYHRV.

S-adenosyl-L-methionine-binding positions include L73, G104, and 123 to 128 (VSSLTL).

Belongs to the RNA methyltransferase RlmH family. Homodimer.

The protein resides in the cytoplasm. The catalysed reaction is pseudouridine(1915) in 23S rRNA + S-adenosyl-L-methionine = N(3)-methylpseudouridine(1915) in 23S rRNA + S-adenosyl-L-homocysteine + H(+). Functionally, specifically methylates the pseudouridine at position 1915 (m3Psi1915) in 23S rRNA. The protein is Ribosomal RNA large subunit methyltransferase H of Paraburkholderia xenovorans (strain LB400).